A 160-amino-acid polypeptide reads, in one-letter code: Cyclic pyranopterin monophosphate synthase (160 aa).

Substrate is bound by residues 74 to 76 (LSH) and 112 to 113 (ME). The active site involves Asp-127.

The protein belongs to the MoaC family. Homohexamer; trimer of dimers.

The enzyme catalyses (8S)-3',8-cyclo-7,8-dihydroguanosine 5'-triphosphate = cyclic pyranopterin phosphate + diphosphate. Its pathway is cofactor biosynthesis; molybdopterin biosynthesis. In terms of biological role, catalyzes the conversion of (8S)-3',8-cyclo-7,8-dihydroguanosine 5'-triphosphate to cyclic pyranopterin monophosphate (cPMP). The polypeptide is Cyclic pyranopterin monophosphate synthase (Pelobacter propionicus (strain DSM 2379 / NBRC 103807 / OttBd1)).